A 468-amino-acid polypeptide reads, in one-letter code: Mitochondrial distribution and morphology protein 10 (468 aa).

Residues 370–386 (ERDGLPGIQRDDHDMHH) are compositionally biased toward basic and acidic residues. Residues 370 to 394 (ERDGLPGIQRDDHDMHHHPQRPHAS) form a disordered region.

This sequence belongs to the MDM10 family. In terms of assembly, component of the ER-mitochondria encounter structure (ERMES) or MDM complex, composed of MMM1, MDM10, MDM12 and MDM34. Associates with the mitochondrial outer membrane sorting assembly machinery SAM(core) complex.

The protein localises to the mitochondrion outer membrane. Its function is as follows. Component of the ERMES/MDM complex, which serves as a molecular tether to connect the endoplasmic reticulum and mitochondria. Components of this complex are involved in the control of mitochondrial shape and protein biogenesis and may function in phospholipid exchange. MDM10 is involved in the late assembly steps of the general translocase of the mitochondrial outer membrane (TOM complex). Functions in the TOM40-specific route of the assembly of outer membrane beta-barrel proteins, including the association of TOM40 with the receptor TOM22 and small TOM proteins. Can associate with the SAM(core) complex as well as the MDM12-MMM1 complex, both involved in late steps of the major beta-barrel assembly pathway, that is responsible for biogenesis of all outer membrane beta-barrel proteins. May act as a switch that shuttles between both complexes and channels precursor proteins into the TOM40-specific pathway. Plays a role in mitochondrial morphology and in the inheritance of mitochondria. This is Mitochondrial distribution and morphology protein 10 from Ajellomyces dermatitidis (strain ER-3 / ATCC MYA-2586) (Blastomyces dermatitidis).